A 200-amino-acid chain; its full sequence is 3-isopropylmalate dehydratase small subunit (200 aa).

It belongs to the LeuD family. LeuD type 1 subfamily. Heterodimer of LeuC and LeuD.

It carries out the reaction (2R,3S)-3-isopropylmalate = (2S)-2-isopropylmalate. It functions in the pathway amino-acid biosynthesis; L-leucine biosynthesis; L-leucine from 3-methyl-2-oxobutanoate: step 2/4. Catalyzes the isomerization between 2-isopropylmalate and 3-isopropylmalate, via the formation of 2-isopropylmaleate. The chain is 3-isopropylmalate dehydratase small subunit from Erythrobacter litoralis (strain HTCC2594).